Reading from the N-terminus, the 334-residue chain is Malate dehydrogenase (334 aa).

16 to 22 contacts NAD(+); that stretch reads GAAGQIA. 2 residues coordinate substrate: Arg97 and Arg103. NAD(+) contacts are provided by residues Asn110, Gln117, and 134-136; that span reads VGN. Substrate-binding residues include Asn136 and Arg167. His192 (proton acceptor) is an active-site residue.

The protein belongs to the LDH/MDH superfamily. MDH type 2 family.

It carries out the reaction (S)-malate + NAD(+) = oxaloacetate + NADH + H(+). Functionally, catalyzes the reversible oxidation of malate to oxaloacetate. The protein is Malate dehydrogenase of Nocardia farcinica (strain IFM 10152).